We begin with the raw amino-acid sequence, 169 residues long: NAD(P)H-quinone oxidoreductase subunit J, chloroplastic (169 aa).

The protein belongs to the complex I 30 kDa subunit family. In terms of assembly, NDH is composed of at least 16 different subunits, 5 of which are encoded in the nucleus.

The protein resides in the plastid. It is found in the chloroplast thylakoid membrane. It catalyses the reaction a plastoquinone + NADH + (n+1) H(+)(in) = a plastoquinol + NAD(+) + n H(+)(out). It carries out the reaction a plastoquinone + NADPH + (n+1) H(+)(in) = a plastoquinol + NADP(+) + n H(+)(out). Its function is as follows. NDH shuttles electrons from NAD(P)H:plastoquinone, via FMN and iron-sulfur (Fe-S) centers, to quinones in the photosynthetic chain and possibly in a chloroplast respiratory chain. The immediate electron acceptor for the enzyme in this species is believed to be plastoquinone. Couples the redox reaction to proton translocation, and thus conserves the redox energy in a proton gradient. This chain is NAD(P)H-quinone oxidoreductase subunit J, chloroplastic, found in Staurastrum punctulatum (Green alga).